Reading from the N-terminus, the 473-residue chain is Trigger factor (473 aa).

Residues Gly162–Pro243 enclose the PPIase FKBP-type domain. A disordered region spans residues Thr433–Lys473. Acidic residues predominate over residues Ala444–Lys473.

Belongs to the FKBP-type PPIase family. Tig subfamily.

It localises to the cytoplasm. The enzyme catalyses [protein]-peptidylproline (omega=180) = [protein]-peptidylproline (omega=0). Involved in protein export. Acts as a chaperone by maintaining the newly synthesized protein in an open conformation. Functions as a peptidyl-prolyl cis-trans isomerase. This chain is Trigger factor, found in Mycolicibacterium vanbaalenii (strain DSM 7251 / JCM 13017 / BCRC 16820 / KCTC 9966 / NRRL B-24157 / PYR-1) (Mycobacterium vanbaalenii).